Reading from the N-terminus, the 63-residue chain is Cecropin-A1 (63 aa).

Positions 1–23 (MNFYNIFVFVALILAITIGQSEA) are cleaved as a signal peptide. Arg62 carries the arginine amide modification.

Belongs to the cecropin family.

The protein localises to the secreted. Cecropins have lytic and antibacterial activity against several Gram-positive and Gram-negative bacteria. This Drosophila sechellia (Fruit fly) protein is Cecropin-A1 (CecA1).